Reading from the N-terminus, the 210-residue chain is Ribosomal RNA small subunit methyltransferase G (210 aa).

Residues Gly-76, Met-81, 127–128, and Arg-145 contribute to the S-adenosyl-L-methionine site; that span reads VE.

This sequence belongs to the methyltransferase superfamily. RNA methyltransferase RsmG family.

The protein localises to the cytoplasm. It carries out the reaction guanosine(527) in 16S rRNA + S-adenosyl-L-methionine = N(7)-methylguanosine(527) in 16S rRNA + S-adenosyl-L-homocysteine. Functionally, specifically methylates the N7 position of guanine in position 527 of 16S rRNA. This is Ribosomal RNA small subunit methyltransferase G from Acinetobacter baumannii (strain AB307-0294).